We begin with the raw amino-acid sequence, 78 residues long: Putative snRNP Sm-like protein (78 aa).

One can recognise a Sm domain in the interval 4–76 (RPLDVIHRSL…VLAISPVDVG (73 aa)).

Belongs to the snRNP Sm proteins family.

In Thermococcus onnurineus (strain NA1), this protein is Putative snRNP Sm-like protein.